Reading from the N-terminus, the 121-residue chain is Putative RNase MJ0127 (121 aa).

Active-site residues include arginine 76 and histidine 81. An RX(4)HXY motif motif is present at residues 76–83 (RDKLIHHY). Tyrosine 83 is modified (O-di-AMP-tyrosine).

The protein belongs to the HepT RNase toxin family. Homodimer, probably forms a complex with cognate antitoxin MJ0128. In terms of processing, modified by cognate antitoxin MJ0128; probably at least 2 successive AMPylation events occur on Tyr-83.

Functionally, probable toxic component of a putative type VII toxin-antitoxin (TA) system, probably an RNase. Probably neutralized by cognate antitoxin MJ0128. Neutralization may be due to AMPylation by MJ0128. The sequence is that of Putative RNase MJ0127 from Methanocaldococcus jannaschii (strain ATCC 43067 / DSM 2661 / JAL-1 / JCM 10045 / NBRC 100440) (Methanococcus jannaschii).